Here is a 218-residue protein sequence, read N- to C-terminus: MSLKWQYINWEEYNNGKTRIYQIYPYAYDALEPHFDKETMNIHHTKHHNTYITNLNAALEGHAELADKSVEELVANLNEVPEAIRTAVRNNGGGHANHTFFWTILSPNGGGQPVGELATAIEAKFGSFDAFKEEFAKAGATRFGSGWAWLVVNNGELEVTSTPNQDSPLTEGKTPVIGLDVWEHAYYLNYQNRRPDYIGAFWNVVDWNAAEKRYQEAK.

The Mn(2+) site is built by histidine 43, histidine 98, aspartate 180, and histidine 184.

It belongs to the iron/manganese superoxide dismutase family. Homodimer. Requires Mn(2+) as cofactor.

The enzyme catalyses 2 superoxide + 2 H(+) = H2O2 + O2. Functionally, destroys superoxide anion radicals which are normally produced within the cells and which are toxic to biological systems. The protein is Superoxide dismutase [Mn] 1 (sodA1) of Bacillus cereus (strain ATCC 14579 / DSM 31 / CCUG 7414 / JCM 2152 / NBRC 15305 / NCIMB 9373 / NCTC 2599 / NRRL B-3711).